The chain runs to 272 residues: Glutamate racemase (272 aa).

Substrate contacts are provided by residues 10 to 11 (DS) and 42 to 43 (YG). The active-site Proton donor/acceptor is the cysteine 73. 74–75 (NT) serves as a coordination point for substrate. The active-site Proton donor/acceptor is cysteine 183. Residue 184–185 (TH) participates in substrate binding.

The protein belongs to the aspartate/glutamate racemases family.

It carries out the reaction L-glutamate = D-glutamate. The protein operates within cell wall biogenesis; peptidoglycan biosynthesis. In terms of biological role, provides the (R)-glutamate required for cell wall biosynthesis. The protein is Glutamate racemase of Leifsonia xyli subsp. xyli (strain CTCB07).